Here is a 431-residue protein sequence, read N- to C-terminus: tRNA(Ile)-lysidine synthase (431 aa).

20-25 (SGGLDS) contributes to the ATP binding site.

The protein belongs to the tRNA(Ile)-lysidine synthase family.

Its subcellular location is the cytoplasm. It catalyses the reaction cytidine(34) in tRNA(Ile2) + L-lysine + ATP = lysidine(34) in tRNA(Ile2) + AMP + diphosphate + H(+). Functionally, ligates lysine onto the cytidine present at position 34 of the AUA codon-specific tRNA(Ile) that contains the anticodon CAU, in an ATP-dependent manner. Cytidine is converted to lysidine, thus changing the amino acid specificity of the tRNA from methionine to isoleucine. This Escherichia coli O157:H7 protein is tRNA(Ile)-lysidine synthase.